Reading from the N-terminus, the 353-residue chain is Holliday junction branch migration complex subunit RuvB (353 aa).

The large ATPase domain (RuvB-L) stretch occupies residues 4-185; sequence ADRLITAVGG…FGIVQRLEFY (182 aa). Residues I24, R25, G66, K69, T70, T71, 132–134, R175, Y185, and R222 each bind ATP; that span reads EDF. T70 is a Mg(2+) binding site. The tract at residues 186–256 is small ATPAse domain (RuvB-S); that stretch reads NIADLSTIVA…TADKALNLLD (71 aa). The interval 259–353 is head domain (RuvB-H); sequence EHGFDHQDRR…GEFVDDAADL (95 aa). Positions 295, 314, and 319 each coordinate DNA.

The protein belongs to the RuvB family. In terms of assembly, homohexamer. Forms an RuvA(8)-RuvB(12)-Holliday junction (HJ) complex. HJ DNA is sandwiched between 2 RuvA tetramers; dsDNA enters through RuvA and exits via RuvB. An RuvB hexamer assembles on each DNA strand where it exits the tetramer. Each RuvB hexamer is contacted by two RuvA subunits (via domain III) on 2 adjacent RuvB subunits; this complex drives branch migration. In the full resolvosome a probable DNA-RuvA(4)-RuvB(12)-RuvC(2) complex forms which resolves the HJ.

It is found in the cytoplasm. The enzyme catalyses ATP + H2O = ADP + phosphate + H(+). Functionally, the RuvA-RuvB-RuvC complex processes Holliday junction (HJ) DNA during genetic recombination and DNA repair, while the RuvA-RuvB complex plays an important role in the rescue of blocked DNA replication forks via replication fork reversal (RFR). RuvA specifically binds to HJ cruciform DNA, conferring on it an open structure. The RuvB hexamer acts as an ATP-dependent pump, pulling dsDNA into and through the RuvAB complex. RuvB forms 2 homohexamers on either side of HJ DNA bound by 1 or 2 RuvA tetramers; 4 subunits per hexamer contact DNA at a time. Coordinated motions by a converter formed by DNA-disengaged RuvB subunits stimulates ATP hydrolysis and nucleotide exchange. Immobilization of the converter enables RuvB to convert the ATP-contained energy into a lever motion, pulling 2 nucleotides of DNA out of the RuvA tetramer per ATP hydrolyzed, thus driving DNA branch migration. The RuvB motors rotate together with the DNA substrate, which together with the progressing nucleotide cycle form the mechanistic basis for DNA recombination by continuous HJ branch migration. Branch migration allows RuvC to scan DNA until it finds its consensus sequence, where it cleaves and resolves cruciform DNA. The protein is Holliday junction branch migration complex subunit RuvB of Pseudomonas syringae pv. tomato (strain ATCC BAA-871 / DC3000).